Consider the following 525-residue polypeptide: GMP synthase [glutamine-hydrolyzing] (525 aa).

One can recognise a Glutamine amidotransferase type-1 domain in the interval 8–206 (PLLILDFGSQ…VVDICKASTD (199 aa)). Cysteine 85 (nucleophile) is an active-site residue. Active-site residues include histidine 180 and glutamate 182. The GMPS ATP-PPase domain maps to 207–400 (WTPEHIIDEA…LGLPHDMVYR (194 aa)). 234 to 240 (SGGVDSS) is an ATP binding site.

As to quaternary structure, homodimer.

The catalysed reaction is XMP + L-glutamine + ATP + H2O = GMP + L-glutamate + AMP + diphosphate + 2 H(+). Its pathway is purine metabolism; GMP biosynthesis; GMP from XMP (L-Gln route): step 1/1. Catalyzes the synthesis of GMP from XMP. This is GMP synthase [glutamine-hydrolyzing] from Legionella pneumophila subsp. pneumophila (strain Philadelphia 1 / ATCC 33152 / DSM 7513).